The chain runs to 217 residues: N-(5'-phosphoribosyl)anthranilate isomerase (217 aa).

Belongs to the TrpF family.

The catalysed reaction is N-(5-phospho-beta-D-ribosyl)anthranilate = 1-(2-carboxyphenylamino)-1-deoxy-D-ribulose 5-phosphate. It participates in amino-acid biosynthesis; L-tryptophan biosynthesis; L-tryptophan from chorismate: step 3/5. This Chlorobium phaeovibrioides (strain DSM 265 / 1930) (Prosthecochloris vibrioformis (strain DSM 265)) protein is N-(5'-phosphoribosyl)anthranilate isomerase.